A 140-amino-acid chain; its full sequence is WGATVITNLMSAIPWIGQDIVEFIWGGFSVNNATLNRFFALHFLLPFVLAALVIMHLIAMHDTVGSGNPLGISGNYDRLPFAPYFVFKDLVTIFIFFIVLSIFVFFMPNALGDSENYVMANPMQTPPAIVPEWYLLPFYA.

A helical membrane pass occupies residues 38–58 (FFALHFLLPFVLAALVIMHLI). The heme b site is built by His-42 and His-56. His-61 serves as a coordination point for a ubiquinone. A helical transmembrane segment spans residues 85 to 105 (FVFKDLVTIFIFFIVLSIFVF).

This sequence belongs to the cytochrome b family. Fungal cytochrome b-c1 complex contains 10 subunits; 3 respiratory subunits, 2 core proteins and 5 low-molecular weight proteins. Cytochrome b-c1 complex is a homodimer. Heme b is required as a cofactor.

Its subcellular location is the mitochondrion inner membrane. Functionally, component of the ubiquinol-cytochrome c reductase complex (complex III or cytochrome b-c1 complex) that is part of the mitochondrial respiratory chain. The b-c1 complex mediates electron transfer from ubiquinol to cytochrome c. Contributes to the generation of a proton gradient across the mitochondrial membrane that is then used for ATP synthesis. This Aspergillus terreus protein is Cytochrome b (cob).